Here is a 315-residue protein sequence, read N- to C-terminus: Protein FRA10AC1 homolog (315 aa).

Position 1 is an N-acetylmethionine (Met1). Positions 1–28 (MHGHGGYDSDFSDDEQGGGSSKKRKKTV) are disordered. Phosphoserine occurs at positions 9 and 12. Lys36 is modified (N6-acetyllysine). A compositionally biased stretch (basic residues) spans 225–235 (KEIKSTKKKSK). Residues 225-308 (KEIKSTKKKS…EKSQEEEFDD (84 aa)) are disordered. 2 stretches are compositionally biased toward basic and acidic residues: residues 236–245 (TTPECDESPR) and 255–278 (EASK…NRNA). 2 positions are modified to phosphoserine: Ser283 and Ser285.

In terms of assembly, interacts with ESS2.

The protein resides in the nucleus. Functionally, may be involved in pre-mRNA splicing. The chain is Protein FRA10AC1 homolog (Fra10ac1) from Mus musculus (Mouse).